The sequence spans 430 residues: Adenylosuccinate synthetase (430 aa).

Residues 13-19 and 41-43 contribute to the GTP site; these read GDEGKGK and GHT. Asp14 acts as the Proton acceptor in catalysis. Residues Asp14 and Gly41 each coordinate Mg(2+). Residues 14–17, 39–42, Thr130, Arg144, Gln225, Thr240, and Arg304 each bind IMP; these read DEGK and NAGH. Residue His42 is the Proton donor of the active site. 300-306 is a substrate binding site; it reads ASTGRPR. GTP contacts are provided by residues Arg306, 332–334, and 414–416; these read KLD and STG.

This sequence belongs to the adenylosuccinate synthetase family. As to quaternary structure, homodimer. It depends on Mg(2+) as a cofactor.

It is found in the cytoplasm. It catalyses the reaction IMP + L-aspartate + GTP = N(6)-(1,2-dicarboxyethyl)-AMP + GDP + phosphate + 2 H(+). It participates in purine metabolism; AMP biosynthesis via de novo pathway; AMP from IMP: step 1/2. Its function is as follows. Plays an important role in the de novo pathway of purine nucleotide biosynthesis. Catalyzes the first committed step in the biosynthesis of AMP from IMP. This Xanthomonas axonopodis pv. citri (strain 306) protein is Adenylosuccinate synthetase.